The following is a 385-amino-acid chain: MLKTQKDKNLENFFSSNNKTKKKKNIIVGLSGGVDSSLSAALLVERGWNVEGLTLWLMKGQGSCCSEGLVDAAGLCEDLGINHKIIDSREIFEREVIKKTTESYEKGFTPLPCSMCNKNVKFEEMLNYAISKKDFTHIATGHYARINKSSYATTLDCKNLVFKEFLLLRGADENKDQSYFLYSLSQEVLSRLEFPLGEMKKEDTRREALRLGLRTAQKPESQDLCLVEHYGSMQIFIDKHIEPKEGEIVHVNGKVLGKHNGIQHFTVGQRKGLGIAWPEPLYVKSLDRLKNIVYVADKSDLFNKEAIISKVNWVSIEEPEQEIEVQAQIRYRSNPVKGTLIPLKNLDNTTTTFKLIFEESQSSVTPGQAAVFYKGEILLGGGLIS.

ATP is bound by residues 29 to 36 and L55; that span reads GLSGGVDS. The active-site Nucleophile is the C116. Cysteines 116 and 225 form a disulfide. G141 serves as a coordination point for ATP. Residues 175-177 form an interaction with tRNA region; that stretch reads KDQ. The Cysteine persulfide intermediate role is filled by C225. The segment at 330 to 331 is interaction with tRNA; that stretch reads RY.

It belongs to the MnmA/TRMU family.

The protein localises to the cytoplasm. It catalyses the reaction S-sulfanyl-L-cysteinyl-[protein] + uridine(34) in tRNA + AH2 + ATP = 2-thiouridine(34) in tRNA + L-cysteinyl-[protein] + A + AMP + diphosphate + H(+). In terms of biological role, catalyzes the 2-thiolation of uridine at the wobble position (U34) of tRNA, leading to the formation of s(2)U34. This chain is tRNA-specific 2-thiouridylase MnmA, found in Prochlorococcus marinus (strain AS9601).